We begin with the raw amino-acid sequence, 231 residues long: Flagellar L-ring protein (231 aa).

A signal peptide spans 1-18 (MNRYVSVLALSGIAVLAG). Cysteine 19 carries the N-palmitoyl cysteine lipid modification. Cysteine 19 is lipidated: S-diacylglycerol cysteine.

The protein belongs to the FlgH family. As to quaternary structure, the basal body constitutes a major portion of the flagellar organelle and consists of four rings (L,P,S, and M) mounted on a central rod.

The protein localises to the cell outer membrane. It is found in the bacterial flagellum basal body. Its function is as follows. Assembles around the rod to form the L-ring and probably protects the motor/basal body from shearing forces during rotation. The protein is Flagellar L-ring protein of Pseudomonas fluorescens (strain SBW25).